Consider the following 172-residue polypeptide: Shikimate kinase (172 aa).

An ATP-binding site is contributed by 11–16 (GAGKST). Residue Ser15 participates in Mg(2+) binding. The substrate site is built by Asp33, Arg57, and Gly79. Arg117 is an ATP binding site. A substrate-binding site is contributed by Arg136. Arg153 is an ATP binding site.

It belongs to the shikimate kinase family. As to quaternary structure, monomer. Requires Mg(2+) as cofactor.

It is found in the cytoplasm. It catalyses the reaction shikimate + ATP = 3-phosphoshikimate + ADP + H(+). Its pathway is metabolic intermediate biosynthesis; chorismate biosynthesis; chorismate from D-erythrose 4-phosphate and phosphoenolpyruvate: step 5/7. In terms of biological role, catalyzes the specific phosphorylation of the 3-hydroxyl group of shikimic acid using ATP as a cosubstrate. The chain is Shikimate kinase from Pseudomonas syringae pv. tomato (strain ATCC BAA-871 / DC3000).